We begin with the raw amino-acid sequence, 308 residues long: Uricase-2 isozyme 1 (308 aa).

Residues K17 and T63 each act as charge relay system in the active site. T63, D64, F165, R182, V237, Q238, and N264 together coordinate urate. Residue H266 is the Charge relay system of the active site. The Microbody targeting signal motif lies at 306 to 308 (SKL).

The protein belongs to the uricase family.

The protein localises to the peroxisome. It catalyses the reaction urate + O2 + H2O = 5-hydroxyisourate + H2O2. It functions in the pathway purine metabolism; urate degradation; (S)-allantoin from urate: step 1/3. Functionally, catalyzes the oxidation of uric acid to 5-hydroxyisourate, which is further processed to form (S)-allantoin. The sequence is that of Uricase-2 isozyme 1 from Canavalia lineata (Beach bean).